A 753-amino-acid chain; its full sequence is Polyribonucleotide nucleotidyltransferase (753 aa).

Mg(2+) contacts are provided by Asp-523 and Asp-529. Residues 589 to 648 (PRIISVRIPVDKIGAVIGPKGAMINQIQDDTGADITIEDDGTVLIGATDGASAEAARSAV) enclose the KH domain. In terms of domain architecture, S1 motif spans 660 to 732 (GERYLGTVVK…DRGKLSLSPV (73 aa)). The segment at 733 to 753 (GAESDAVAETADAIESSQTEA) is disordered.

It belongs to the polyribonucleotide nucleotidyltransferase family. The cofactor is Mg(2+).

The protein localises to the cytoplasm. It catalyses the reaction RNA(n+1) + phosphate = RNA(n) + a ribonucleoside 5'-diphosphate. In terms of biological role, involved in mRNA degradation. Catalyzes the phosphorolysis of single-stranded polyribonucleotides processively in the 3'- to 5'-direction. This chain is Polyribonucleotide nucleotidyltransferase, found in Micrococcus luteus (strain ATCC 4698 / DSM 20030 / JCM 1464 / CCM 169 / CCUG 5858 / IAM 1056 / NBRC 3333 / NCIMB 9278 / NCTC 2665 / VKM Ac-2230) (Micrococcus lysodeikticus).